A 128-amino-acid chain; its full sequence is NADH-quinone oxidoreductase subunit A (128 aa).

The next 3 helical transmembrane spans lie at 12 to 32, 66 to 86, and 96 to 116; these read FAIF…LSFL, FYLI…LYAW, and LGFY…VYLV.

This sequence belongs to the complex I subunit 3 family. NDH-1 is composed of 14 different subunits. Subunits NuoA, H, J, K, L, M, N constitute the membrane sector of the complex.

It is found in the cell membrane. It carries out the reaction a quinone + NADH + 5 H(+)(in) = a quinol + NAD(+) + 4 H(+)(out). Functionally, NDH-1 shuttles electrons from NADH, via FMN and iron-sulfur (Fe-S) centers, to quinones in the respiratory chain. The immediate electron acceptor for the enzyme in this species is believed to be ubiquinone. Couples the redox reaction to proton translocation (for every two electrons transferred, four hydrogen ions are translocated across the cytoplasmic membrane), and thus conserves the redox energy in a proton gradient. This is NADH-quinone oxidoreductase subunit A from Baumannia cicadellinicola subsp. Homalodisca coagulata.